A 175-amino-acid polypeptide reads, in one-letter code: Sec-independent protein translocase protein TatB (175 aa).

A helical transmembrane segment spans residues 1-21 (MLDLGLSKMALIGVVALVVLG). 2 disordered regions span residues 96 to 115 (VSPG…AASG) and 153 to 175 (VQSG…ARFL). Residues 160-175 (VARHRPASLRRPARFL) are compositionally biased toward basic residues.

The protein belongs to the TatB family. In terms of assembly, the Tat system comprises two distinct complexes: a TatABC complex, containing multiple copies of TatA, TatB and TatC subunits, and a separate TatA complex, containing only TatA subunits. Substrates initially bind to the TatABC complex, which probably triggers association of the separate TatA complex to form the active translocon.

The protein resides in the cell inner membrane. In terms of biological role, part of the twin-arginine translocation (Tat) system that transports large folded proteins containing a characteristic twin-arginine motif in their signal peptide across membranes. Together with TatC, TatB is part of a receptor directly interacting with Tat signal peptides. TatB may form an oligomeric binding site that transiently accommodates folded Tat precursor proteins before their translocation. In Burkholderia mallei (strain ATCC 23344), this protein is Sec-independent protein translocase protein TatB.